A 258-amino-acid polypeptide reads, in one-letter code: UPF0246 protein YaaA (258 aa).

Belongs to the UPF0246 family.

The polypeptide is UPF0246 protein YaaA (Escherichia coli O8 (strain IAI1)).